Reading from the N-terminus, the 127-residue chain is Apolipoprotein C-IV (127 aa).

The first 27 residues, Met1–Cys27, serve as a signal peptide directing secretion.

It belongs to the apolipoprotein C4 family.

It localises to the secreted. Functionally, may participate in lipoprotein metabolism. The chain is Apolipoprotein C-IV (APOC4) from Chlorocebus sabaeus (Green monkey).